Reading from the N-terminus, the 1645-residue chain is Cortactin-binding protein 2 (1645 aa).

Disordered regions lie at residues 1–28, 269–293, 366–435, 451–478, and 492–612; these read MATD…EAAK, LKRG…SVSI, IVSS…AALH, GNAN…SRDS, and ALSR…PPKP. Residues 119-276 are a coiled coil; sequence RKMQERMSTQ…EQLKRGNDSK (158 aa). Composition is skewed to polar residues over residues 407 to 417 and 451 to 477; these read QTPTIAPQSHA and GNAN…TSRD. R495 bears the Asymmetric dimethylarginine mark. Residues 580-590 are compositionally biased toward polar residues; that stretch reads TMASPPSTLPQ. 6 ANK repeats span residues 706-736, 740-769, 773-802, 806-835, 839-868, and 909-939; these read GRPT…DINY, DGHS…QVNA, NGFT…NINH, EGQT…DRSV, DGWT…PARR, and EGWT…EPER. Residues 868-898 form a disordered region; the sequence is RNSLHEEEPESGVFDLDQGEESPEGTSKPVI. The disordered stretch occupies residues 1442–1479; the sequence is CSRKKGESGAWRKVSTSPRKKSGRFSPPSWSKPGPSEE. The residue at position 1521 (S1521) is a Phosphoserine. The interval 1551–1645 is disordered; sequence DDLRSFDSPG…EINNNSKEEI (95 aa). Polar residues-rich tracts occupy residues 1558–1569 and 1582–1597; these read SPGNSPAFSATV and PFSS…SQSK. Residues 1620 to 1634 show a composition bias toward low complexity; sequence SQNTKRSSSSSNTRQ. The span at 1635-1645 shows a compositional bias: polar residues; it reads IEINNNSKEEI.

In terms of assembly, interacts with CTTN/cortactin SH3 domain. Interacts with STRN, STRN4/zinedin and MOB4/phocein; this interactions mediate the association with the STRIPAK core complex and may regulate dendritic spine distribution of the STRIPAK complex in hippocampal neurons. Activation of glutamate receptors weakens the interaction with STRN and STRN4.

The protein localises to the cytoplasm. It is found in the cell cortex. The protein resides in the cell projection. It localises to the dendritic spine. Regulates the dendritic spine distribution of CTTN/cortactin in hippocampal neurons, and thus controls dendritic spinogenesis and dendritic spine maintenance. Associates with the striatin-interacting phosphatase and kinase (STRIPAK) core complex to regulate dendritic spine distribution of the STRIPAK complex in hippocampal neurons. The sequence is that of Cortactin-binding protein 2 (CTTNBP2) from Mustela putorius furo (European domestic ferret).